Here is a 502-residue protein sequence, read N- to C-terminus: Probable cytosol aminopeptidase (502 aa).

Lysine 270 and aspartate 275 together coordinate Mn(2+). Residue lysine 282 is part of the active site. Aspartate 293, aspartate 352, and glutamate 354 together coordinate Mn(2+). The active site involves arginine 356.

This sequence belongs to the peptidase M17 family. Mn(2+) serves as cofactor.

It localises to the cytoplasm. The enzyme catalyses Release of an N-terminal amino acid, Xaa-|-Yaa-, in which Xaa is preferably Leu, but may be other amino acids including Pro although not Arg or Lys, and Yaa may be Pro. Amino acid amides and methyl esters are also readily hydrolyzed, but rates on arylamides are exceedingly low.. The catalysed reaction is Release of an N-terminal amino acid, preferentially leucine, but not glutamic or aspartic acids.. Presumably involved in the processing and regular turnover of intracellular proteins. Catalyzes the removal of unsubstituted N-terminal amino acids from various peptides. The chain is Probable cytosol aminopeptidase from Desulfotalea psychrophila (strain LSv54 / DSM 12343).